We begin with the raw amino-acid sequence, 1097 residues long: Transmembrane protein 132D (1097 aa).

Residues 1 to 30 form the signal peptide; that stretch reads MCPSEMGTLWYLWSPVLISLAALFSKVTEG. Residues 31–913 are Extracellular-facing; it reads RGILESIQRF…PDQAAKGLSD (883 aa). Residues 233–245 are compositionally biased toward basic and acidic residues; sequence DERGDCAKEDSRK. Disordered regions lie at residues 233-263 and 885-906; these read DERG…SPPL and SFPD…DPDQ. A helical transmembrane segment spans residues 914–934; that stretch reads LEIGMYALLGVFCLAILVFLI. At 935-1097 the chain is on the cytoplasmic side; sequence NCVTFALKYR…SCMERLHEHV (163 aa). Positions 1021-1042 are disordered; that stretch reads MLTDDKEQKSEPPTSPTSKRKR.

This sequence belongs to the TMEM132 family. As to expression, expressed in mature oligodendrocytes in the brain.

The protein localises to the membrane. In terms of biological role, regulates neuronal morphology via inhibition of the WAVE regulatory complex (WCR), a complex that controls F-actin cytoskeletal dynamics. This is Transmembrane protein 132D (Tmem132d) from Rattus norvegicus (Rat).